The primary structure comprises 227 residues: Uridylate kinase (227 aa).

Position 9-10 (9-10 (GS)) interacts with ATP. Glycine 44 contacts UMP. Residues glycine 45 and arginine 49 each contribute to the ATP site. Residues aspartate 66 and 114 to 120 (TVPGHTT) each bind UMP. Positions 140, 146, and 149 each coordinate ATP.

Belongs to the UMP kinase family. In terms of assembly, homohexamer.

It is found in the cytoplasm. The enzyme catalyses UMP + ATP = UDP + ADP. Its pathway is pyrimidine metabolism; CTP biosynthesis via de novo pathway; UDP from UMP (UMPK route): step 1/1. Its activity is regulated as follows. Inhibited by UTP. Catalyzes the reversible phosphorylation of UMP to UDP. This chain is Uridylate kinase, found in Natronomonas pharaonis (strain ATCC 35678 / DSM 2160 / CIP 103997 / JCM 8858 / NBRC 14720 / NCIMB 2260 / Gabara) (Halobacterium pharaonis).